Here is a 79-residue protein sequence, read N- to C-terminus: Putative defensin-like protein 146 (79 aa).

The first 25 residues, 1–25 (MMKNQFQLSLIILTFFILLELGVMG), serve as a signal peptide directing secretion. 4 disulfide bridges follow: Cys-35/Cys-78, Cys-46/Cys-66, Cys-51/Cys-72, and Cys-55/Cys-74.

This sequence belongs to the DEFL family.

The protein localises to the secreted. The chain is Putative defensin-like protein 146 (LCR9) from Arabidopsis thaliana (Mouse-ear cress).